A 522-amino-acid polypeptide reads, in one-letter code: MSFSRSAADAADTLPDLAATLGAPAERAFVTLGDAFHTRLPAAPLAAPYVVGFSDDVAQLLDLPPAIAAQPGFAELFAGNPTRDWPAHAMPYASVYSGHQFGVWAGQLGDGRALTIGELPGTDGRRYELQLKGGGRTPYSRMGDGRAVLRSSIREFLCSEAMHHLGIPTTRALTVIGSDQPVVREEIETAAVVTRVSESFVRFGHFEHFFSNDRPDLLRQLADHVIDRFYPACRDADDPYLALLEAATLRTADLVAQWQAVGFCHGVMNTDNMSILGVTIDYGPFGFVDAFDANHICNHSDTSGRYAYRMQPRIAHWNCYCLAQALLPLIGLQHGIADDDARAERAVDDAQAVLAKFPERFGPALERAMRAKLGLALEREGDAELANKLLETMHASHADFTLTFRRLAQISKHDASRDAPVRDLFIDREAFDAWANLYRARLSEETRDDAARAVAMNRANPKYVLRNHLAEVAIRRAKEKDFSEVERLAQILRRPFDEQPEHEAYAALPPDWAGSLEVSCSS.

Positions 109, 111, 112, 132, 144, 145, 195, and 202 each coordinate ATP. The active-site Proton acceptor is Asp-271. Residues Asn-272 and Asp-281 each contribute to the Mg(2+) site. Asp-281 lines the ATP pocket.

Belongs to the SELO family. Requires Mg(2+) as cofactor. It depends on Mn(2+) as a cofactor.

It carries out the reaction L-seryl-[protein] + ATP = 3-O-(5'-adenylyl)-L-seryl-[protein] + diphosphate. The catalysed reaction is L-threonyl-[protein] + ATP = 3-O-(5'-adenylyl)-L-threonyl-[protein] + diphosphate. It catalyses the reaction L-tyrosyl-[protein] + ATP = O-(5'-adenylyl)-L-tyrosyl-[protein] + diphosphate. The enzyme catalyses L-histidyl-[protein] + UTP = N(tele)-(5'-uridylyl)-L-histidyl-[protein] + diphosphate. It carries out the reaction L-seryl-[protein] + UTP = O-(5'-uridylyl)-L-seryl-[protein] + diphosphate. The catalysed reaction is L-tyrosyl-[protein] + UTP = O-(5'-uridylyl)-L-tyrosyl-[protein] + diphosphate. Functionally, nucleotidyltransferase involved in the post-translational modification of proteins. It can catalyze the addition of adenosine monophosphate (AMP) or uridine monophosphate (UMP) to a protein, resulting in modifications known as AMPylation and UMPylation. This Burkholderia orbicola (strain MC0-3) protein is Protein nucleotidyltransferase YdiU.